The sequence spans 297 residues: Ribosomal RNA small subunit methyltransferase A (297 aa).

S-adenosyl-L-methionine is bound by residues asparagine 31, leucine 33, glycine 58, glutamate 79, aspartate 104, and asparagine 129.

Belongs to the class I-like SAM-binding methyltransferase superfamily. rRNA adenine N(6)-methyltransferase family. RsmA subfamily.

It is found in the cytoplasm. The enzyme catalyses adenosine(1518)/adenosine(1519) in 16S rRNA + 4 S-adenosyl-L-methionine = N(6)-dimethyladenosine(1518)/N(6)-dimethyladenosine(1519) in 16S rRNA + 4 S-adenosyl-L-homocysteine + 4 H(+). In terms of biological role, specifically dimethylates two adjacent adenosines (A1518 and A1519) in the loop of a conserved hairpin near the 3'-end of 16S rRNA in the 30S particle. May play a critical role in biogenesis of 30S subunits. The protein is Ribosomal RNA small subunit methyltransferase A of Staphylococcus aureus (strain Mu3 / ATCC 700698).